The sequence spans 541 residues: Protein wntless homolog (541 aa).

Residues 1–15 (MAGAIIENMSTKKLC) are Cytoplasmic-facing. A helical membrane pass occupies residues 16-36 (IVGGILLVFQIVAFLVGGLIA). The Lumenal segment spans residues 37–232 (PAPTTAVSYV…GIHQNGGFTK (196 aa)). Residues 101 to 202 (MEMSPWFQFM…KYYLLNIRLP (102 aa)) are interaction with Wnt proteins. A helical transmembrane segment spans residues 233-253 (VWFAMKTFLTPSIFIIMVWYW). Residues 254 to 268 (RRITMMSRPPVLLEK) lie on the Cytoplasmic side of the membrane. A helical transmembrane segment spans residues 269-289 (VIFALGISMTFINIPVEWFSI). Residues 290-303 (GFDWTWMLLFGDIR) are Lumenal-facing. Residues 304-324 (QGIFYAMLLSFWIIFCGEHMM) traverse the membrane as a helical segment. At 325-331 (DQHERNH) the chain is on the cytoplasmic side. Residues 332–352 (IAGYWKQVGPIAVGSFCLFIF) traverse the membrane as a helical segment. The Lumenal segment spans residues 353-380 (DMCERGVQLTNPFYSIWTTDVGTELAMA). A helical transmembrane segment spans residues 381 to 401 (FIIVAGICLCLYFLFLCFMVF). At 402–431 (QVFRNISGKQSSLPAMSKVRRLHYEGLIFR) the chain is on the cytoplasmic side. Residues 432 to 452 (FKFLMLITLACAAMTVIFFIV) traverse the membrane as a helical segment. Residues 453 to 471 (SQVTEGHWKWGGVTVQVSS) lie on the Lumenal side of the membrane. Residues 472-492 (AFFTGIYGMWNLYVFALMFLY) form a helical membrane-spanning segment. At 493–541 (APSHKNYGEDQSNGDLGVHSGEELQLTTTITHVDGPTEIYKLTRKEAQE) the chain is on the cytoplasmic side.

It belongs to the wntless family. As to quaternary structure, interacts with WNT3A. Interacts with WNT1, WNT3 and WNT5A. In terms of processing, N-glycosylated. In terms of tissue distribution, expressed in the brain, skeletal muscle, heart muscle, lung, gut, liver, and kidney (at protein level). In the brain, expressed in the cortex, striatum, ventral tegmentum, nucleus accumbens and to a lesser extent in the Purkinjie cells in the cerebellum. Expressed in eye iridocorneal angle.

The protein localises to the golgi apparatus membrane. It is found in the cytoplasmic vesicle membrane. Its subcellular location is the cell membrane. The protein resides in the endoplasmic reticulum membrane. It localises to the early endosome membrane. Its function is as follows. Regulates Wnt proteins sorting and secretion in a feedback regulatory mechanism. This reciprocal interaction plays a key role in the regulation of expression, subcellular location, binding and organelle-specific association of Wnt proteins. Also plays an important role in establishment of the anterior-posterior body axis formation during development. This is Protein wntless homolog (Wls) from Rattus norvegicus (Rat).